The primary structure comprises 396 residues: Ornithine aminotransferase 2 (396 aa).

N6-(pyridoxal phosphate)lysine is present on Lys-255.

This sequence belongs to the class-III pyridoxal-phosphate-dependent aminotransferase family. OAT subfamily. Pyridoxal 5'-phosphate is required as a cofactor.

The protein localises to the cytoplasm. It carries out the reaction a 2-oxocarboxylate + L-ornithine = L-glutamate 5-semialdehyde + an L-alpha-amino acid. Its pathway is amino-acid biosynthesis; L-proline biosynthesis; L-glutamate 5-semialdehyde from L-ornithine: step 1/1. In terms of biological role, catalyzes the interconversion of ornithine to glutamate semialdehyde. This Staphylococcus saprophyticus subsp. saprophyticus (strain ATCC 15305 / DSM 20229 / NCIMB 8711 / NCTC 7292 / S-41) protein is Ornithine aminotransferase 2.